The sequence spans 192 residues: Mediator of RNA polymerase II transcription subunit 29 (192 aa).

The segment at 32–51 is disordered; the sequence is MQQQSPQQMQPAPVPQQTQQ.

The protein belongs to the Mediator complex subunit 29 family. As to quaternary structure, component of the Mediator complex.

The protein resides in the nucleus. Component of the Mediator complex, a coactivator involved in the regulated transcription of nearly all RNA polymerase II-dependent genes. Mediator functions as a bridge to convey information from gene-specific regulatory proteins to the basal RNA polymerase II transcription machinery. Mediator is recruited to promoters by direct interactions with regulatory proteins and serves as a scaffold for the assembly of a functional preinitiation complex with RNA polymerase II and the general transcription factors. In Bombyx mori (Silk moth), this protein is Mediator of RNA polymerase II transcription subunit 29 (ix).